The following is a 348-amino-acid chain: MTPFNPIDHPHRRYNPLTGQWVLVSPHRAKRPWQGAQETPSQQMLPAHDPDCFLCAGNTRVTGDKNPDYKGTYVFTNDFAALMADTPDAPDSHDPLMRCQSARGTSRVICFSPDHSKTLPELSLPALTEIVRTWQTQTAELGKTYPWVQVFENKGAAMGCSNPHPHGQVWANSFLPNEAEREDRLQKAYFAEQRSPMLVDYVQRELADGSRTVVETEHWLAVVPYWAAWPFETLLLPKTHVLRITDLSDEQRDSLALALKKLTSRYDNLFQCSFPYSMGWHGAPFNGEENAHWQLHAHFYPPLLRSATVRKFMVGYEMLAETQRDLTAEQAAERLRAVSDIHFRESGV.

Residue 28-31 (RAKR) participates in UDP-alpha-D-glucose binding. C52 and C55 together coordinate Zn(2+). UDP-alpha-D-glucose contacts are provided by residues V61 and 77-78 (ND). H115 is a Zn(2+) binding site. Residues N153 and 159–161 (GCS) contribute to the UDP-alpha-D-glucose site. A Zn(2+)-binding site is contributed by H164. The active-site Tele-UMP-histidine intermediate is H166. Q168 contacts UDP-alpha-D-glucose. Residues E182, H281, H296, and H298 each coordinate Fe cation. UDP-alpha-D-glucose-binding positions include 311–312 (KF), 316–317 (YE), and Q323.

Belongs to the galactose-1-phosphate uridylyltransferase type 1 family. Zn(2+) is required as a cofactor.

It catalyses the reaction alpha-D-galactose 1-phosphate + UDP-alpha-D-glucose = alpha-D-glucose 1-phosphate + UDP-alpha-D-galactose. It functions in the pathway carbohydrate metabolism; galactose metabolism. The protein is Galactose-1-phosphate uridylyltransferase (galT) of Salmonella typhimurium (strain LT2 / SGSC1412 / ATCC 700720).